We begin with the raw amino-acid sequence, 263 residues long: 4-hydroxy-2-oxo-heptane-1,7-dioate aldolase (263 aa).

Catalysis depends on H45, which acts as the Proton acceptor. Residue Q147 participates in substrate binding. E149 contacts a divalent metal cation. Residues A174 and D175 each coordinate substrate. D175 lines the a divalent metal cation pocket.

This sequence belongs to the HpcH/HpaI aldolase family. Homohexamer; trimer of dimers. Requires a divalent metal cation as cofactor.

It catalyses the reaction 4-hydroxy-2-oxoheptanedioate = succinate semialdehyde + pyruvate. It participates in aromatic compound metabolism; 4-hydroxyphenylacetate degradation; pyruvate and succinate semialdehyde from 4-hydroxyphenylacetate: step 7/7. Functionally, catalyzes the reversible retro-aldol cleavage of 4-hydroxy-2-ketoheptane-1,7-dioate (HKHD) to pyruvate and succinic semialdehyde. The protein is 4-hydroxy-2-oxo-heptane-1,7-dioate aldolase of Salmonella heidelberg (strain SL476).